We begin with the raw amino-acid sequence, 253 residues long: 5'/3'-nucleotidase SurE (253 aa).

The a divalent metal cation site is built by aspartate 8, aspartate 9, serine 39, and asparagine 92.

Belongs to the SurE nucleotidase family. A divalent metal cation is required as a cofactor.

The protein resides in the cytoplasm. It carries out the reaction a ribonucleoside 5'-phosphate + H2O = a ribonucleoside + phosphate. The enzyme catalyses a ribonucleoside 3'-phosphate + H2O = a ribonucleoside + phosphate. The catalysed reaction is [phosphate](n) + H2O = [phosphate](n-1) + phosphate + H(+). Nucleotidase with a broad substrate specificity as it can dephosphorylate various ribo- and deoxyribonucleoside 5'-monophosphates and ribonucleoside 3'-monophosphates with highest affinity to 3'-AMP. Also hydrolyzes polyphosphate (exopolyphosphatase activity) with the preference for short-chain-length substrates (P20-25). Might be involved in the regulation of dNTP and NTP pools, and in the turnover of 3'-mononucleotides produced by numerous intracellular RNases (T1, T2, and F) during the degradation of various RNAs. The protein is 5'/3'-nucleotidase SurE of Enterobacter sp. (strain 638).